The following is a 458-amino-acid chain: D-inositol 3-phosphate glycosyltransferase (458 aa).

Histidine 16 serves as a coordination point for 1D-myo-inositol 3-phosphate. Residues 22–23 and glycine 30 each bind UDP-N-acetyl-alpha-D-glucosamine; that span reads QP. Residues 27-32, lysine 85, tyrosine 118, threonine 142, and arginine 162 each bind 1D-myo-inositol 3-phosphate; that span reads DAGGMN. UDP-N-acetyl-alpha-D-glucosamine-binding residues include arginine 236, lysine 241, and glutamine 302. Mg(2+)-binding residues include tyrosine 311, arginine 312, and serine 314. 2 residues coordinate UDP-N-acetyl-alpha-D-glucosamine: glutamate 324 and glutamate 332. Threonine 338 is a Mg(2+) binding site. Positions 428–458 are disordered; it reads VAAQNVTGSSSRTRRPWRRRRSTLLPMTGRS. Positions 439-449 are enriched in basic residues; that stretch reads RTRRPWRRRRS.

This sequence belongs to the glycosyltransferase group 1 family. MshA subfamily. In terms of assembly, homodimer.

It catalyses the reaction 1D-myo-inositol 3-phosphate + UDP-N-acetyl-alpha-D-glucosamine = 1D-myo-inositol 2-acetamido-2-deoxy-alpha-D-glucopyranoside 3-phosphate + UDP + H(+). Catalyzes the transfer of a N-acetyl-glucosamine moiety to 1D-myo-inositol 3-phosphate to produce 1D-myo-inositol 2-acetamido-2-deoxy-glucopyranoside 3-phosphate in the mycothiol biosynthesis pathway. This Gordonia bronchialis (strain ATCC 25592 / DSM 43247 / BCRC 13721 / JCM 3198 / KCTC 3076 / NBRC 16047 / NCTC 10667) (Rhodococcus bronchialis) protein is D-inositol 3-phosphate glycosyltransferase.